The sequence spans 323 residues: Ribosomal RNA small subunit methyltransferase H (323 aa).

Residues 39-41, D57, F84, D103, and Q110 contribute to the S-adenosyl-L-methionine site; that span reads GGY.

This sequence belongs to the methyltransferase superfamily. RsmH family.

Its subcellular location is the cytoplasm. The enzyme catalyses cytidine(1402) in 16S rRNA + S-adenosyl-L-methionine = N(4)-methylcytidine(1402) in 16S rRNA + S-adenosyl-L-homocysteine + H(+). Functionally, specifically methylates the N4 position of cytidine in position 1402 (C1402) of 16S rRNA. In Gluconobacter oxydans (strain 621H) (Gluconobacter suboxydans), this protein is Ribosomal RNA small subunit methyltransferase H.